The following is a 236-amino-acid chain: Transmembrane protein 65 (236 aa).

A mitochondrion-targeting transit peptide spans 1–57; sequence MSRLLPLLRSRTARSLRPGPAAAAAPRPPSWCCCGRGLLALAAPGGPRALGTHPKKE. The Cytoplasmic portion of the chain corresponds to 58 to 106; sequence PIEALNTAQGARDFIYSLHSSERSCLLKELHRFESIAIAQEKLEAQPPT. The chain crosses the membrane as a helical span at residues 107–127; sequence PGQLRYVFIHNAIPFIGFGFL. Topologically, residues 128–138 are extracellular; sequence DNAIMIVAGTH. Residues 139–161 traverse the membrane as a helical segment; that stretch reads IELSIGIILGISTMAAAALGNLV. At 162 to 205 the chain is on the cytoplasmic side; it reads SDLAGLGLAGYVEALASRLGLSIPDLSPKQVDMWQTRVSSHLGK. Residues 206-226 form a helical membrane-spanning segment; it reads AVGVTIGCILGMFPLIFFGGG. Residues 227–236 lie on the Extracellular side of the membrane; it reads EDDEKLEKKN.

In terms of assembly, monomer. Homodimer. Interacts with GJA1. Interacts weakly with DSP. Interacts with SCN1B.

It localises to the cell membrane. The protein resides in the mitochondrion inner membrane. Functionally, essential for maintaining proper cardiac intercalated disk (ICD) structure and function as well as cardiac conduction velocity in the heart. Its association with SCN1B is required for stabilizing the perinexus in the ICD and for localization of GJA1 and SCN5A to the ICD. May regulate the function of the gap junction protein GJA1 and may contribute to the stability and proper localization of GJA1 to cardiac intercalated disk thereby regulating gap junction communication. Regulates mitochondrial respiration and mitochondrial DNA copy number maintenance. The chain is Transmembrane protein 65 (TMEM65) from Bos taurus (Bovine).